A 491-amino-acid chain; its full sequence is Probable cytosol aminopeptidase (491 aa).

2 residues coordinate Mn(2+): Lys264 and Asp269. Residue Lys276 is part of the active site. 3 residues coordinate Mn(2+): Asp287, Asp346, and Glu348. Residue Arg350 is part of the active site.

The protein belongs to the peptidase M17 family. Requires Mn(2+) as cofactor.

The protein localises to the cytoplasm. The catalysed reaction is Release of an N-terminal amino acid, Xaa-|-Yaa-, in which Xaa is preferably Leu, but may be other amino acids including Pro although not Arg or Lys, and Yaa may be Pro. Amino acid amides and methyl esters are also readily hydrolyzed, but rates on arylamides are exceedingly low.. It carries out the reaction Release of an N-terminal amino acid, preferentially leucine, but not glutamic or aspartic acids.. Its function is as follows. Presumably involved in the processing and regular turnover of intracellular proteins. Catalyzes the removal of unsubstituted N-terminal amino acids from various peptides. In Xylella fastidiosa (strain M12), this protein is Probable cytosol aminopeptidase.